The chain runs to 205 residues: Large ribosomal subunit protein uL4 (205 aa).

The interval 56–78 (VSGTTAKPYRQKHTGRARQGSLR) is disordered.

It belongs to the universal ribosomal protein uL4 family. In terms of assembly, part of the 50S ribosomal subunit.

One of the primary rRNA binding proteins, this protein initially binds near the 5'-end of the 23S rRNA. It is important during the early stages of 50S assembly. It makes multiple contacts with different domains of the 23S rRNA in the assembled 50S subunit and ribosome. Its function is as follows. Forms part of the polypeptide exit tunnel. The protein is Large ribosomal subunit protein uL4 of Ehrlichia ruminantium (strain Gardel).